The chain runs to 92 residues: Putative defensin-like protein 225 (92 aa).

The N-terminal stretch at 1–26 is a signal peptide; that stretch reads MKYGVLFMVSCGVMFLILSHVEEVEA. Intrachain disulfides connect Cys-32–Cys-92, Cys-42–Cys-70, and Cys-68–Cys-88.

This sequence belongs to the DEFL family.

It is found in the secreted. The protein is Putative defensin-like protein 225 (SCRL1) of Arabidopsis thaliana (Mouse-ear cress).